The sequence spans 2562 residues: Zinc finger homeobox protein 2 (2562 aa).

Positions methionine 1–valine 13 are enriched in polar residues. Disordered stretches follow at residues methionine 1–aspartate 88 and proline 337–proline 410. Residues glycine 56 to glycine 73 show a composition bias toward basic and acidic residues. 2 consecutive C2H2-type zinc fingers follow at residues leucine 446–histidine 469 and tyrosine 501–histidine 525. Disordered stretches follow at residues glutamine 530 to threonine 559, proline 603 to proline 651, and arginine 669 to aspartate 705. A compositionally biased stretch (pro residues) spans proline 609 to proline 622. The segment covering leucine 690–proline 704 has biased composition (polar residues). 3 consecutive C2H2-type zinc fingers follow at residues histidine 752 to histidine 776, leucine 815 to histidine 839, and tyrosine 864 to histidine 888. The segment at arginine 923–aspartate 966 is disordered. The C2H2-type 6 zinc-finger motif lies at tyrosine 1003–histidine 1026. Disordered regions lie at residues asparagine 1058–arginine 1126 and methionine 1140–threonine 1166. Composition is skewed to pro residues over residues serine 1091–alanine 1101 and aspartate 1114–alanine 1124. 2 consecutive C2H2-type zinc fingers follow at residues tyrosine 1185–histidine 1211 and phenylalanine 1242–histidine 1266. Basic and acidic residues predominate over residues arginine 1278 to proline 1305. The interval arginine 1278–glycine 1313 is disordered. A C2H2-type 9 zinc finger spans residues leucine 1474–histidine 1497. A disordered region spans residues leucine 1520–alanine 1584. Over residues tyrosine 1521–proline 1531 the composition is skewed to pro residues. Residues arginine 1589–alanine 1648 constitute a DNA-binding region (homeobox 1). The C2H2-type 10; degenerate zinc-finger motif lies at serine 1664–tyrosine 1687. Residues aspartate 1689–valine 1760 are disordered. Residues glutamine 1690–glutamate 1713 show a composition bias toward acidic residues. A compositionally biased stretch (basic and acidic residues) spans threonine 1743–glycine 1752. The C2H2-type 11 zinc finger occupies tyrosine 1761–histidine 1783. Disordered stretches follow at residues serine 1814–arginine 1853, arginine 1907–phenylalanine 1934, proline 1971–glycine 2057, lysine 2114–alanine 2136, proline 2186–alanine 2210, glutamine 2263–serine 2313, and leucine 2391–serine 2429. Residues aspartate 1851 to glutamine 1910 constitute a DNA-binding region (homeobox 2). The span at threonine 1985 to alanine 1996 shows a compositional bias: pro residues. Positions lysine 2008–proline 2037 are enriched in low complexity. A compositionally biased stretch (gly residues) spans glycine 2038–glycine 2051. A DNA-binding region (homeobox 3) is located at residues glutamine 2058–lysine 2117. Residues proline 2188–threonine 2200 are compositionally biased toward pro residues. A compositionally biased stretch (polar residues) spans proline 2275–proline 2286. A compositionally biased stretch (basic and acidic residues) spans serine 2295–proline 2305. A compositionally biased stretch (pro residues) spans proline 2395–leucine 2411. The C2H2-type 12; degenerate zinc-finger motif lies at tyrosine 2441–arginine 2461. A C2H2-type 13 zinc finger spans residues tyrosine 2485 to histidine 2509. Disordered regions lie at residues serine 2506 to threonine 2525 and glutamate 2540 to leucine 2562. The segment covering threonine 2553–leucine 2562 has biased composition (low complexity).

Expressed in brain (at protein level). Expressed at the highest levels in the pyramidal cell layer of the hippocampus, the suprachiasmatic nucleus, laterodorsal thalamic nucleus, lateral geniculate nucleus, substantia nigra pars compacta, and magnocellular part of the red nucleus (at protein level). Highly expressed in dorsal root ganglia. Expressed at lower levels in kidney, stomach, liver, heart and testis.

It is found in the nucleus. Transcriptional regulator that is critical for the regulation of pain perception and processing of noxious stimuli. This is Zinc finger homeobox protein 2 from Mus musculus (Mouse).